A 1515-amino-acid polypeptide reads, in one-letter code: Adhesion G protein-coupled receptor L1 (1515 aa).

The N-terminal stretch at M1–G24 is a signal peptide. At L25–L857 the chain is on the extracellular side. The 90-residue stretch at A40–V129 folds into the SUEL-type lectin domain. 5 disulfide bridges follow: C41–C71, C50–C128, C83–C115, C96–C102, and C140–C322. E42 contacts alpha-L-rhamnose. Residue N98 is glycosylated (N-linked (GlcNAc...) asparagine). Position 117-120 (G117–K120) interacts with alpha-L-rhamnose. One can recognise an Olfactomedin-like domain in the interval V139–P398. The segment at D400–P468 is disordered. A compositionally biased stretch (low complexity) spans P405–T441. The segment covering D453–P468 has biased composition (pro residues). 2 disulfides stabilise this stretch: C480-C515 and C503-C532. N-linked (GlcNAc...) asparagine glycosylation is found at N531, N640, N741, N800, N805, and N826. The GAIN-B domain maps to P669–Y850. Intrachain disulfides connect C801–C832 and C820–C834. A GPS region spans residues C801–Y850. The helical transmembrane segment at L858–I878 threads the bilayer. Over S879–N892 the chain is Cytoplasmic. A helical transmembrane segment spans residues T893–I913. The Extracellular portion of the chain corresponds to D914–E919. The chain crosses the membrane as a helical span at residues V920–L940. The Cytoplasmic portion of the chain corresponds to C941–Y964. The chain crosses the membrane as a helical span at residues Y965–Y985. Residues R986–Y1001 are Extracellular-facing. The chain crosses the membrane as a helical span at residues F1002–M1022. The Cytoplasmic portion of the chain corresponds to V1023 to A1049. Residues L1050–I1070 traverse the membrane as a helical segment. Over N1071–S1074 the chain is Extracellular. Residues V1075–F1095 traverse the membrane as a helical segment. The Cytoplasmic portion of the chain corresponds to H1096–L1515. Residues T1144–T1184 form a disordered region. The residue at position 1237 (R1237) is an Omega-N-methylarginine. A Phosphoserine modification is found at S1263. Disordered regions lie at residues F1291–N1316, R1337–A1369, E1401–P1470, and Y1492–L1515. Composition is skewed to pro residues over residues G1345–P1356 and A1449–P1461. S1497 and S1514 each carry phosphoserine.

It belongs to the G-protein coupled receptor 2 family. Adhesion G-protein coupled receptor (ADGR) subfamily. In terms of assembly, forms a heterodimer, consisting of a large extracellular region (p120) non-covalently linked to a seven-transmembrane moiety (p85). Interacts with syntaxin and with proteins of the SHANK family via the PDZ domain. Isoform 2 interacts with TENM2. Interacts (via extracellular domain) with FLRT1, FLRT2 and FLRT3 (via extracellular domain). Autoproteolytically cleaved into 2 subunits, an extracellular subunit and a seven-transmembrane subunit. This proteolytic processing takes place early in the biosynthetic pathway, either in the endoplasmic reticulum or in the early compartment of the Golgi apparatus. As to expression, expressed in the brain (at protein level). Brain specific distribution but low levels are also detected in most tissues.

It localises to the cell membrane. It is found in the cell projection. The protein localises to the axon. The protein resides in the growth cone. Its subcellular location is the synapse. It localises to the presynaptic cell membrane. It is found in the synaptosome. Its function is as follows. Calcium-independent receptor of high affinity for alpha-latrotoxin, an excitatory neurotoxin present in black widow spider venom which triggers massive exocytosis from neurons and neuroendocrine cells. Receptor probably implicated in the regulation of exocytosis. In terms of biological role, receptor for TENM2 that mediates heterophilic synaptic cell-cell contact and postsynaptic specialization. This chain is Adhesion G protein-coupled receptor L1, found in Rattus norvegicus (Rat).